The chain runs to 423 residues: Nucleoporin NUP42 (423 aa).

Residues 1 to 25 (MAICQFFLQGRCRFGDRCWNEHPGA) form a C3H1-type zinc finger. Residues 14-15 (FG) form an FG 1 repeat. The tract at residues 24–85 (GARGAGGGRQ…EKPYFSSFDS (62 aa)) is disordered. Polar residues predominate over residues 40–69 (SGNNRRGWNTTSQRYSNVIQPSSFSKSTPW). The tract at residues 94–170 (GFGLSENPFA…EYHNFLTSNN (77 aa)) is interaction with HIV-1 Vpr. One copy of the FG 2 repeat lies at 95 to 96 (FG). Ser106 is modified (phosphoserine). FG repeat units follow at residues 218-219 (FG), 220-221 (FG), 265-266 (FG), 271-272 (FG), 288-289 (FG), 290-291 (FG), 311-312 (FG), 336-337 (FG), 345-346 (FG), and 364-365 (FG). Residues 365–423 (GNSSISTSLSASSSIIATDNVLFTPRDKLTVEELEQFQSKKFTLGKIPLKPPPLELLNV) form an interaction with GLE1 region.

In terms of assembly, probable component of the nuclear pore complex (NPC). Interacts with nuclear export protein NXF1. Interacts with GLE1. Able to form a heterotrimer with NUP155 and GLE1 in vitro. Interacts with XPO1. As to quaternary structure, (Microbial infection) Interacts with the HIV-1 virus proteins Rev and Vpr. The interaction with HIV-1 Rev, a protein that mediates nuclear export of unspliced viral RNAs, suggests that its function may be bypassed by the HIV-1 virus. Post-translationally, O-glycosylated. In terms of tissue distribution, ubiquitously expressed.

It localises to the nucleus. The protein resides in the nuclear pore complex. Its subcellular location is the nucleus membrane. In terms of biological role, required for the export of mRNAs containing poly(A) tails from the nucleus into the cytoplasm. Functionally, (Microbial infection) In case of infection by HIV-1, it may participate in the docking of viral Vpr at the nuclear envelope. The sequence is that of Nucleoporin NUP42 from Homo sapiens (Human).